The following is a 92-amino-acid chain: UPF0223 protein SPCG_1392 (92 aa).

The protein belongs to the UPF0223 family.

The polypeptide is UPF0223 protein SPCG_1392 (Streptococcus pneumoniae (strain CGSP14)).